Here is a 304-residue protein sequence, read N- to C-terminus: Putative dihydroorotate dehydrogenase A (fumarate) (304 aa).

FMN-binding positions include serine 21 and 45-46; that span reads KS. Residues lysine 45, 69 to 73, and asparagine 129 each bind substrate; that span reads NAVGL. An FMN-binding site is contributed by asparagine 129. Cysteine 132 serves as the catalytic Nucleophile. FMN-binding residues include lysine 168 and isoleucine 194. Position 195-196 (195-196) interacts with substrate; it reads NT. FMN is bound by residues glycine 220, 246–247, and 268–269; these read GG and GS.

This sequence belongs to the dihydroorotate dehydrogenase family. Type 1 subfamily. As to quaternary structure, homodimer. It depends on FMN as a cofactor.

It localises to the cytoplasm. It carries out the reaction (S)-dihydroorotate + fumarate = orotate + succinate. It functions in the pathway pyrimidine metabolism; UMP biosynthesis via de novo pathway. Functionally, catalyzes the conversion of dihydroorotate to orotate with fumarate as the electron acceptor. This chain is Putative dihydroorotate dehydrogenase A (fumarate) (pyrD), found in Pediococcus pentosaceus (strain ATCC 25745 / CCUG 21536 / LMG 10740 / 183-1w).